Here is a 103-residue protein sequence, read N- to C-terminus: Large ribosomal subunit protein bL21 (103 aa).

The protein belongs to the bacterial ribosomal protein bL21 family. Part of the 50S ribosomal subunit. Contacts protein L20.

In terms of biological role, this protein binds to 23S rRNA in the presence of protein L20. The polypeptide is Large ribosomal subunit protein bL21 (Teredinibacter turnerae (strain ATCC 39867 / T7901)).